A 394-amino-acid polypeptide reads, in one-letter code: Seipin (394 aa).

At 1–27 (MVNDPPVPALLWAQEMGHVMAGRARKL) the chain is on the cytoplasmic side. A helical transmembrane segment spans residues 28–48 (LLQFGVFFCTILLLLWVSVFL). Residues 49 to 242 (YGSFYYSYMP…TCAFVGVASN (194 aa)) are Lumenal-facing. N-linked (GlcNAc...) asparagine glycosylation is found at N88 and N242. Residues 243 to 263 (FTFLSVIVLFSYMQWVWGGIW) traverse the membrane as a helical segment. Over 264–394 (PRQRLSLQVN…VRQRPICSSS (131 aa)) the chain is Cytoplasmic. A disordered region spans residues 281–394 (RKDIQRKVSA…VRQRPICSSS (114 aa)). S289 carries the phosphoserine modification. Positions 292-303 (QPGPQGQEESPQ) are enriched in low complexity. S346 and S351 each carry phosphoserine.

It belongs to the seipin family. Undecamer (an oligomer having eleven subunits). Oligomerization is important for its function in lipid droplet formation. Interacts with LDAF1 to form an oligomeric complex. Interacts with RAB18. Interacts with ZFYVE1 in a RAB18-dependent manner.

Its subcellular location is the endoplasmic reticulum membrane. The protein localises to the lipid droplet. In terms of biological role, plays a crucial role in the formation of lipid droplets (LDs) which are storage organelles at the center of lipid and energy homeostasis. In association with LDAF1, defines the sites of LD formation in the ER. Also required for growth and maturation of small nascent LDs into larger mature LDs. Mediates the formation and/or stabilization of endoplasmic reticulum-lipid droplets (ER-LD) contacts, facilitating protein and lipid delivery from the ER into growing LDs. Regulates the maturation of ZFYVE1-positive nascent LDs and the function of the RAB18-ZFYVE1 complex in mediating the formation of ER-LD contacts. Binds anionic phospholipids including phosphatidic acid. Plays an important role in the differentiation and development of adipocytes. The protein is Seipin of Bos taurus (Bovine).